The chain runs to 489 residues: Glutamate--tRNA ligase (489 aa).

Positions 11-21 (PSPTGHLHIGG) match the 'HIGH' region motif. The Zn(2+) site is built by C108, C110, C136, and H138. Residues 253–257 (KLSKR) carry the 'KMSKS' region motif. K256 lines the ATP pocket.

This sequence belongs to the class-I aminoacyl-tRNA synthetase family. Glutamate--tRNA ligase type 1 subfamily. As to quaternary structure, monomer. Zn(2+) serves as cofactor.

Its subcellular location is the cytoplasm. It catalyses the reaction tRNA(Glu) + L-glutamate + ATP = L-glutamyl-tRNA(Glu) + AMP + diphosphate. Functionally, catalyzes the attachment of glutamate to tRNA(Glu) in a two-step reaction: glutamate is first activated by ATP to form Glu-AMP and then transferred to the acceptor end of tRNA(Glu). The protein is Glutamate--tRNA ligase of Geobacillus thermodenitrificans (strain NG80-2).